The sequence spans 345 residues: WD40 repeat protein poxJ (345 aa).

4 WD repeats span residues 15–49 (ANPP…YDVS), 59–100 (LFNF…EAQQ), 101–146 (VAAH…PLAT), and 250–284 (VNDV…RLKS).

The protein belongs to the WD repeat rae1 family.

The protein operates within secondary metabolite biosynthesis. Functionally, WD40 repeat protein; part of the gene cluster that mediates the biosynthesis of oxaleimides, cytotoxic compounds containing an unusual disubstituted succinimide moiety. The first step of the pathway is provided by the HR-PKS poxF that serves in a new mode of collaborative biosynthesis with the PKS-NRPS poxE, by providing the olefin containing amino acid substrate via the synthesis of an ACP-bound dec-4-enoate. The cytochrome P450 monooxygenase poxM-catalyzed oxidation at the alpha-position creates the enzyme-bound 2-hydroxydec-4-enoyl-ACP thioester, which may be prone to spontaneous hydrolysis to yield 2-hydroxydec-4-enoic acid due to increased electrophilicity of the carbonyl. 2-hydroxydec-4-enoic acid can then be further oxidized by poxM to yield the alpha-ketoacid 2-oxodec-4-enoicacid, which is reductively aminated by the aminotransferase poxL to yield (S,E)-2-aminodec-4-enoic acid. The Hybrid PKS-NRPS synthetase poxE then performs condensation between the octaketide product of its PKS modules and the amino group of (S,E)-2-aminodec-4-enoic acid which is activated and incorporated by the adenylation domain. The resulting aminoacyl product can be cyclized by the Diels-Alderase PoxQ and reductively released by the reductive (R) domain of poxE to yield an aldehyde intermediate. The released aldehyde is then substrate for a Knoevenagel condensation by the hydrolyase poxO followed by an oxidation at the 5-position of the pyrrolidone ring. The presence of the olefin from the amino acid building block allows for migration of the substituted allyl group to occur. This allylic transposition reaction takes place in a conjugate addition, semipinacol-like fashion to yield a succinimide intermediate. Iterative two-electron oxidations of the C7 methyl of the succinimide intermediate to the carboxylic acid can be catalyzed by one of two remaining cytochrome P450 monooxygenasess poxC or poxD to yield oxaleimide A. Subsequent oxidation yields the maleimide scaffold oxaleimide I. Both oxaleimide A and oxaleimide I can undergo oxidative modifications in the decalin ring to yield the series of products oxaleimides B to H. This is WD40 repeat protein poxJ from Penicillium oxalicum (strain 114-2 / CGMCC 5302) (Penicillium decumbens).